The chain runs to 310 residues: 4-hydroxyproline 2-epimerase (310 aa).

The active-site Proton acceptor is cysteine 85. Residues 86–87 (GH), histidine 205, and aspartate 231 contribute to the substrate site. Cysteine 235 serves as the catalytic Proton donor. Residue 236–237 (GT) participates in substrate binding.

This sequence belongs to the proline racemase family.

It catalyses the reaction trans-4-hydroxy-L-proline = cis-4-hydroxy-D-proline. Catalyzes the epimerization of trans-4-hydroxy-L-proline (t4LHyp) to cis-4-hydroxy-D-proline (c4DHyp). May be involved in a degradation pathway of t4LHyp, which would allow L.aggregata to grow on t4LHyp as a sole carbon source. Displays no proline racemase activity. The chain is 4-hydroxyproline 2-epimerase from Roseibium aggregatum (strain ATCC 25650 / DSM 13394 / JCM 20685 / NBRC 16684 / NCIMB 2208 / IAM 12614 / B1) (Stappia aggregata).